Reading from the N-terminus, the 198-residue chain is Imidazoleglycerol-phosphate dehydratase (198 aa).

It belongs to the imidazoleglycerol-phosphate dehydratase family.

It localises to the cytoplasm. The catalysed reaction is D-erythro-1-(imidazol-4-yl)glycerol 3-phosphate = 3-(imidazol-4-yl)-2-oxopropyl phosphate + H2O. The protein operates within amino-acid biosynthesis; L-histidine biosynthesis; L-histidine from 5-phospho-alpha-D-ribose 1-diphosphate: step 6/9. The protein is Imidazoleglycerol-phosphate dehydratase of Nitratidesulfovibrio vulgaris (strain DP4) (Desulfovibrio vulgaris).